A 341-amino-acid chain; its full sequence is Anthranilate phosphoribosyltransferase (341 aa).

5-phospho-alpha-D-ribose 1-diphosphate is bound by residues Gly-84, Asn-94–Thr-97, Lys-112–Ser-120, and Ser-124. Gly-84 is an anthranilate binding site. Ser-96 serves as a coordination point for Mg(2+). Arg-170 contributes to the anthranilate binding site. 2 residues coordinate Mg(2+): Asp-229 and Glu-230.

This sequence belongs to the anthranilate phosphoribosyltransferase family. Homodimer. Mg(2+) serves as cofactor.

The enzyme catalyses N-(5-phospho-beta-D-ribosyl)anthranilate + diphosphate = 5-phospho-alpha-D-ribose 1-diphosphate + anthranilate. It participates in amino-acid biosynthesis; L-tryptophan biosynthesis; L-tryptophan from chorismate: step 2/5. In terms of biological role, catalyzes the transfer of the phosphoribosyl group of 5-phosphorylribose-1-pyrophosphate (PRPP) to anthranilate to yield N-(5'-phosphoribosyl)-anthranilate (PRA). The protein is Anthranilate phosphoribosyltransferase of Methylobacillus flagellatus (strain ATCC 51484 / DSM 6875 / VKM B-1610 / KT).